A 189-amino-acid chain; its full sequence is MSKLFYAFAVLAVHVLTSSPTTAASNLPVNLVTGPAFTTPAGAAHRRFLRSIHEGEDSLKPSAFSEERTALRAMDYLLKPKHKKLAAALKKSTSKHKLSVAPEKMKSIQVLGDPKNPEREWFKRLYNSKRGDPQTLRKLGQFKTEAQLSRYIKFYVVCRTCIACYSSGRSDSCHRTPRMVRTVGVGCRD.

The first 23 residues, 1 to 23 (MSKLFYAFAVLAVHVLTSSPTTA), serve as a signal peptide directing secretion. The RxLR-dEER signature appears at 47–68 (RFLRSIHEGEDSLKPSAFSEER).

The protein belongs to the RxLR effector family.

It localises to the secreted. The protein localises to the host cytoplasm. The protein resides in the host nucleus. Effector that is involved in host plant infection. Contributes to virulence during the early infection stage, by inhibiting plant defense responses induced by both PAMP-triggered immunity (PTI) and effector-triggered immunity (ETI). In Phytophthora infestans (strain T30-4) (Potato late blight agent), this protein is RxLR effector protein CRE18.